The primary structure comprises 301 residues: D-alanine--D-alanine ligase (301 aa).

The ATP-grasp domain maps to 99 to 294; that stretch reads KCILKAANIR…FSELIDMIID (196 aa). 126 to 181 provides a ligand contact to ATP; it reads IEGMGYPVVVKPTHGGSSVATFIIKEEKDIKNAVTEAFKWDSEVIIEKFIKGDEIT. Mg(2+)-binding residues include Asp-248, Glu-261, and Asn-263.

It belongs to the D-alanine--D-alanine ligase family. Mg(2+) serves as cofactor. It depends on Mn(2+) as a cofactor.

It is found in the cytoplasm. It catalyses the reaction 2 D-alanine + ATP = D-alanyl-D-alanine + ADP + phosphate + H(+). The protein operates within cell wall biogenesis; peptidoglycan biosynthesis. Functionally, cell wall formation. The sequence is that of D-alanine--D-alanine ligase from Clostridium botulinum (strain Eklund 17B / Type B).